Consider the following 248-residue polypeptide: MEDIVDQELSNYWEPSSFLQNEDFEYDRSWPLEEAISGSYDSSSPDGAASSPASKNIVSERNRRQKLNQRLFALRSVVPNITKMDKASIIKDAISYIEGLQYEEKKLEAEIRELESTPKSSLSFSKDFDRDLLVPVTSKKMKQLDSGSSTSLIEVLELKVTFMGERTMVVSVTCNKRTDTMVKLCEVFESLNLKILTSNLTSFSGMIFHTVFIEADEEEQEVLRLKIETGIGAYNETQSPTLSIDSLY.

Residues 37–54 show a composition bias toward low complexity; sequence SGSYDSSSPDGAASSPAS. The disordered stretch occupies residues 37-60; sequence SGSYDSSSPDGAASSPASKNIVSE. The 50-residue stretch at 51–100 folds into the bHLH domain; sequence SPASKNIVSERNRRQKLNQRLFALRSVVPNITKMDKASIIKDAISYIEGL.

Homodimer. As to expression, expressed constitutively in roots, leaves, stems, and flowers.

The protein localises to the nucleus. This is Transcription factor bHLH35 (BHLH35) from Arabidopsis thaliana (Mouse-ear cress).